A 457-amino-acid chain; its full sequence is Exodeoxyribonuclease 7 large subunit (457 aa).

This sequence belongs to the XseA family. Heterooligomer composed of large and small subunits.

It localises to the cytoplasm. It catalyses the reaction Exonucleolytic cleavage in either 5'- to 3'- or 3'- to 5'-direction to yield nucleoside 5'-phosphates.. In terms of biological role, bidirectionally degrades single-stranded DNA into large acid-insoluble oligonucleotides, which are then degraded further into small acid-soluble oligonucleotides. This Photorhabdus laumondii subsp. laumondii (strain DSM 15139 / CIP 105565 / TT01) (Photorhabdus luminescens subsp. laumondii) protein is Exodeoxyribonuclease 7 large subunit.